The chain runs to 181 residues: Adenylyl-sulfate kinase (181 aa).

Residue 20–27 (GLSGAGKS) participates in ATP binding. Residue S94 is the Phosphoserine intermediate of the active site.

It belongs to the APS kinase family.

The enzyme catalyses adenosine 5'-phosphosulfate + ATP = 3'-phosphoadenylyl sulfate + ADP + H(+). Its pathway is sulfur metabolism; hydrogen sulfide biosynthesis; sulfite from sulfate: step 2/3. Its function is as follows. Catalyzes the synthesis of activated sulfate. In Deinococcus deserti (strain DSM 17065 / CIP 109153 / LMG 22923 / VCD115), this protein is Adenylyl-sulfate kinase.